A 117-amino-acid polypeptide reads, in one-letter code: Calcitonin receptor-stimulating peptide 2 (117 aa).

An N-terminal signal peptide occupies residues 1–25 (MGFWKFPPFLVLSILVLYQAGMFHT). Positions 26 to 79 (APVRLPLESSFDSATLTEEEVSLLLVAMVKDYVQMKATVLEQESEDFSITAQEK) are excised as a propeptide. Cys81 and Cys86 are joined by a disulfide.

This sequence belongs to the calcitonin family. Mainly expressed in the thyroid gland and CNS. Found in the nerve cells of the cerebrum, hippocampus, hypothalamus, pons/midbrain and thalamus. Also detected in the glia-like cells of pons/midbrain and in meninx of tactus opticus.

The protein localises to the secreted. The polypeptide is Calcitonin receptor-stimulating peptide 2 (CRSP2) (Sus scrofa (Pig)).